Here is a 539-residue protein sequence, read N- to C-terminus: Aluminum-activated malate transporter 13 (539 aa).

The next 6 helical transmembrane spans lie at Val-57–Val-77, Asn-80–Leu-100, Gly-107–Ser-127, Ile-130–Met-150, Leu-165–Ile-185, and Leu-192–Ile-212.

Belongs to the aromatic acid exporter (TC 2.A.85) family.

The protein resides in the membrane. In terms of biological role, malate transporter. This chain is Aluminum-activated malate transporter 13 (ALMT13), found in Arabidopsis thaliana (Mouse-ear cress).